The primary structure comprises 166 residues: NAD(P)H-quinone oxidoreductase subunit I, chloroplastic (166 aa).

4Fe-4S ferredoxin-type domains are found at residues 55 to 84 and 95 to 124; these read GRIH…VDWK and LNYS…MTEE. Residues C64, C67, C70, C74, C104, C107, C110, and C114 each contribute to the [4Fe-4S] cluster site.

It belongs to the complex I 23 kDa subunit family. In terms of assembly, NDH is composed of at least 16 different subunits, 5 of which are encoded in the nucleus. It depends on [4Fe-4S] cluster as a cofactor.

It is found in the plastid. Its subcellular location is the chloroplast thylakoid membrane. It catalyses the reaction a plastoquinone + NADH + (n+1) H(+)(in) = a plastoquinol + NAD(+) + n H(+)(out). It carries out the reaction a plastoquinone + NADPH + (n+1) H(+)(in) = a plastoquinol + NADP(+) + n H(+)(out). Its function is as follows. NDH shuttles electrons from NAD(P)H:plastoquinone, via FMN and iron-sulfur (Fe-S) centers, to quinones in the photosynthetic chain and possibly in a chloroplast respiratory chain. The immediate electron acceptor for the enzyme in this species is believed to be plastoquinone. Couples the redox reaction to proton translocation, and thus conserves the redox energy in a proton gradient. This Oblivia mikanioides (Salmea mikanioides) protein is NAD(P)H-quinone oxidoreductase subunit I, chloroplastic.